We begin with the raw amino-acid sequence, 141 residues long: Nucleoside diphosphate kinase 1 (141 aa).

6 residues coordinate ATP: lysine 11, phenylalanine 59, arginine 87, threonine 93, arginine 104, and asparagine 114. Histidine 117 serves as the catalytic Pros-phosphohistidine intermediate.

The protein belongs to the NDK family. Homotetramer. The cofactor is Mg(2+).

It is found in the cytoplasm. The catalysed reaction is a 2'-deoxyribonucleoside 5'-diphosphate + ATP = a 2'-deoxyribonucleoside 5'-triphosphate + ADP. It catalyses the reaction a ribonucleoside 5'-diphosphate + ATP = a ribonucleoside 5'-triphosphate + ADP. Its function is as follows. Major role in the synthesis of nucleoside triphosphates other than ATP. The ATP gamma phosphate is transferred to the NDP beta phosphate via a ping-pong mechanism, using a phosphorylated active-site intermediate. This Protochlamydia amoebophila (strain UWE25) protein is Nucleoside diphosphate kinase 1.